We begin with the raw amino-acid sequence, 519 residues long: 3-octaprenyl-4-hydroxybenzoate carboxy-lyase (519 aa).

A Mn(2+)-binding site is contributed by N177. Residues I180–R182, R194–L196, and R199–G200 contribute to the prenylated FMN site. E243 provides a ligand contact to Mn(2+). The active-site Proton donor is the D318.

It belongs to the UbiD family. In terms of assembly, homohexamer. Prenylated FMN serves as cofactor. The cofactor is Mn(2+).

The protein resides in the cell membrane. It catalyses the reaction a 4-hydroxy-3-(all-trans-polyprenyl)benzoate + H(+) = a 2-(all-trans-polyprenyl)phenol + CO2. It functions in the pathway cofactor biosynthesis; ubiquinone biosynthesis. Its function is as follows. Catalyzes the decarboxylation of 3-octaprenyl-4-hydroxy benzoate to 2-octaprenylphenol, an intermediate step in ubiquinone biosynthesis. This is 3-octaprenyl-4-hydroxybenzoate carboxy-lyase from Burkholderia mallei (strain ATCC 23344).